The primary structure comprises 388 residues: D-xylose dehydrogenase (388 aa).

It belongs to the Gfo/Idh/MocA family. As to quaternary structure, homotetramer. Zn(2+) is required as a cofactor.

The catalysed reaction is D-xylose + NADP(+) = D-xylono-1,5-lactone + NADPH + H(+). The enzyme catalyses D-xylose + NAD(+) = D-xylono-1,5-lactone + NADH + H(+). Its pathway is carbohydrate metabolism; D-xylose degradation. In terms of biological role, catalyzes the NADP(+)-dependent oxidation of D-xylose. Is able to use both NADP(+) and NAD(+); however, the enzyme shows a very strong preference for NADP(+). Is likely involved in the first step of the oxidative D-xylose degradation pathway. The protein is D-xylose dehydrogenase (xdh) of Paenarthrobacter nicotinovorans (Arthrobacter nicotinovorans).